Consider the following 421-residue polypeptide: MVADVLLTHFNQLFCLNDPGHPLTGQEMKKATIVEDGYIAIKDGLIVALGSGEPDAELVGPQTIMRSYKGKIATPGIIDCHTHLVYGGSREHEFAKKLAGVSYLDILAQGGGILSTVRATRSASFDNLYQKSKRLLDYMLLHGVTTVEAKSGYGLDWETEKRQLDVVAALEKDHPIDLVSTFMAAHAIPEEYKGNPKAYLDVIIKDMLPVVKEENLAEFCDIFCEKNVFTADESRYLLSKAKEMGFKLRIHADEIASIGGVDVAAELSAVSAEHLMMITDDGIAKLIGAGVIGNLLPATTFSLMEDTYAPARKMIDAGMAITLSTDSNPGSCPTANMQFVMQLGCFMLRLTPLEVLNAVTINAAYSVNRQERVGSLTVGKEADIAIFDAPNIDYPFYFFATNLIHQVYKKGQLTVDRGRIL.

Fe(3+)-binding residues include His-81 and His-83. Residues His-81 and His-83 each coordinate Zn(2+). Residues Arg-90, Tyr-153, and His-186 each contribute to the 4-imidazolone-5-propanoate site. An N-formimidoyl-L-glutamate-binding site is contributed by Tyr-153. Position 251 (His-251) interacts with Fe(3+). His-251 provides a ligand contact to Zn(2+). Glu-254 contacts 4-imidazolone-5-propanoate. Asp-326 contributes to the Fe(3+) binding site. Residue Asp-326 participates in Zn(2+) binding. The N-formimidoyl-L-glutamate site is built by Asn-328 and Gly-330. 4-imidazolone-5-propanoate is bound at residue Ser-331.

It belongs to the metallo-dependent hydrolases superfamily. HutI family. Zn(2+) serves as cofactor. Fe(3+) is required as a cofactor.

The protein localises to the cytoplasm. The catalysed reaction is 4-imidazolone-5-propanoate + H2O = N-formimidoyl-L-glutamate. It participates in amino-acid degradation; L-histidine degradation into L-glutamate; N-formimidoyl-L-glutamate from L-histidine: step 3/3. In terms of biological role, catalyzes the hydrolytic cleavage of the carbon-nitrogen bond in imidazolone-5-propanoate to yield N-formimidoyl-L-glutamate. It is the third step in the universal histidine degradation pathway. The polypeptide is Imidazolonepropionase (Streptococcus pyogenes serotype M2 (strain MGAS10270)).